The primary structure comprises 529 residues: Phosphoenolpyruvate carboxykinase (ATP) (529 aa).

Residues R60, Y195, and K201 each coordinate substrate. Residues K201, H220, and 236 to 244 (GLSGTGKTT) contribute to the ATP site. K201 and H220 together coordinate Mn(2+). Residue D257 coordinates Mn(2+). The ATP site is built by E285, R323, and S448. Residue R323 coordinates substrate.

This sequence belongs to the phosphoenolpyruvate carboxykinase (ATP) family. Requires Mn(2+) as cofactor.

The protein localises to the cytoplasm. It carries out the reaction oxaloacetate + ATP = phosphoenolpyruvate + ADP + CO2. Its pathway is carbohydrate biosynthesis; gluconeogenesis. Functionally, involved in the gluconeogenesis. Catalyzes the conversion of oxaloacetate (OAA) to phosphoenolpyruvate (PEP) through direct phosphoryl transfer between the nucleoside triphosphate and OAA. This is Phosphoenolpyruvate carboxykinase (ATP) from Geobacter sp. (strain M21).